A 348-amino-acid chain; its full sequence is Histidinol-phosphate aminotransferase (348 aa).

Position 210 is an N6-(pyridoxal phosphate)lysine (K210).

It belongs to the class-II pyridoxal-phosphate-dependent aminotransferase family. Histidinol-phosphate aminotransferase subfamily. As to quaternary structure, homodimer. Pyridoxal 5'-phosphate serves as cofactor.

It catalyses the reaction L-histidinol phosphate + 2-oxoglutarate = 3-(imidazol-4-yl)-2-oxopropyl phosphate + L-glutamate. Its pathway is amino-acid biosynthesis; L-histidine biosynthesis; L-histidine from 5-phospho-alpha-D-ribose 1-diphosphate: step 7/9. The sequence is that of Histidinol-phosphate aminotransferase from Cytophaga hutchinsonii (strain ATCC 33406 / DSM 1761 / CIP 103989 / NBRC 15051 / NCIMB 9469 / D465).